A 499-amino-acid chain; its full sequence is Increased recombination centers protein 15 (499 aa).

D47 to Y56 lines the FAD pocket.

This sequence belongs to the class-I pyridine nucleotide-disulfide oxidoreductase family.

Its subcellular location is the cytoplasm. The polypeptide is Increased recombination centers protein 15 (IRC15) (Saccharomyces cerevisiae (strain ATCC 204508 / S288c) (Baker's yeast)).